A 206-amino-acid polypeptide reads, in one-letter code: Transmembrane emp24 domain-containing protein bai (206 aa).

The signal sequence occupies residues 1–20; sequence MARTLLILCTLMAWAWTGEA. Over 21–172 the chain is Lumenal; the sequence is VMFKLTPNTQ…RDTNEKTNSR (152 aa). Positions 30 to 140 constitute a GOLD domain; it reads QKCLKEDIQA…LKPLEVDLKR (111 aa). A helical transmembrane segment spans residues 173 to 193; that stretch reads VLFFSIFSMCCLLGLATWQVL. Residues 194-206 are Cytoplasmic-facing; it reads YLRRYFKAKKLIE.

The protein belongs to the EMP24/GP25L family.

It is found in the membrane. Eca and bai are essential, though not redundant, for dorsoventral patterning of the embryo. Specifically required during early embryogenesis for the activity of maternal tkv, while the zygotic tkv is not affected. The polypeptide is Transmembrane emp24 domain-containing protein bai (Drosophila ananassae (Fruit fly)).